A 151-amino-acid chain; its full sequence is Ribosome maturation factor RimP (151 aa).

This sequence belongs to the RimP family.

The protein resides in the cytoplasm. Required for maturation of 30S ribosomal subunits. The sequence is that of Ribosome maturation factor RimP from Caldicellulosiruptor bescii (strain ATCC BAA-1888 / DSM 6725 / KCTC 15123 / Z-1320) (Anaerocellum thermophilum).